The chain runs to 51 residues: ATP synthase F(1) complex subunit epsilon, mitochondrial (51 aa).

3 positions are modified to N6-acetyllysine; alternate: K21, K32, and K37. 3 positions are modified to N6-succinyllysine; alternate: K21, K32, and K37. At K44 the chain carries N6-acetyllysine.

The protein belongs to the eukaryotic ATPase epsilon family. As to quaternary structure, component of the ATP synthase complex composed at least of ATP5F1A/subunit alpha, ATP5F1B/subunit beta, ATP5MC1/subunit c (homooctomer), MT-ATP6/subunit a, MT-ATP8/subunit 8, ATP5ME/subunit e, ATP5MF/subunit f, ATP5MG/subunit g, ATP5MK/subunit k, ATP5MJ/subunit j, ATP5F1C/subunit gamma, ATP5F1D/subunit delta, ATP5F1E/subunit epsilon, ATP5PF/subunit F6, ATP5PB/subunit b, ATP5PD/subunit d, ATP5PO/subunit OSCP. ATP synthase complex consists of a soluble F(1) head domain (subunits alpha(3) and beta(3)) - the catalytic core - and a membrane F(0) domain - the membrane proton channel (subunits c, a, 8, e, f, g, k and j). These two domains are linked by a central stalk (subunits gamma, delta, and epsilon) rotating inside the F1 region and a stationary peripheral stalk (subunits F6, b, d, and OSCP).

The protein localises to the mitochondrion. It localises to the mitochondrion inner membrane. Its function is as follows. Subunit epsilon, of the mitochondrial membrane ATP synthase complex (F(1)F(0) ATP synthase or Complex V) that produces ATP from ADP in the presence of a proton gradient across the membrane which is generated by electron transport complexes of the respiratory chain. ATP synthase complex consist of a soluble F(1) head domain - the catalytic core - and a membrane F(1) domain - the membrane proton channel. These two domains are linked by a central stalk rotating inside the F(1) region and a stationary peripheral stalk. During catalysis, ATP synthesis in the catalytic domain of F(1) is coupled via a rotary mechanism of the central stalk subunits to proton translocation. In vivo, can only synthesize ATP although its ATP hydrolase activity can be activated artificially in vitro. May be essential for the assembly of F(1) and may play an important role in the incorporation of the hydrophobic subunit c into the F(1)-c oligomer rotor of the mitochondrial ATP synthase complex. The chain is ATP synthase F(1) complex subunit epsilon, mitochondrial from Rattus norvegicus (Rat).